A 180-amino-acid chain; its full sequence is Large ribosomal subunit protein uL5 (180 aa).

Belongs to the universal ribosomal protein uL5 family. In terms of assembly, part of the 50S ribosomal subunit; part of the 5S rRNA/L5/L18/L25 subcomplex. Contacts the 5S rRNA and the P site tRNA. Forms a bridge to the 30S subunit in the 70S ribosome.

This is one of the proteins that bind and probably mediate the attachment of the 5S RNA into the large ribosomal subunit, where it forms part of the central protuberance. In the 70S ribosome it contacts protein S13 of the 30S subunit (bridge B1b), connecting the 2 subunits; this bridge is implicated in subunit movement. Contacts the P site tRNA; the 5S rRNA and some of its associated proteins might help stabilize positioning of ribosome-bound tRNAs. The polypeptide is Large ribosomal subunit protein uL5 (Lacticaseibacillus casei (strain BL23) (Lactobacillus casei)).